A 199-amino-acid chain; its full sequence is MPNYKLTYFNMRGRAEIIRYIFAYLDIQYEDHRIEQADWPEIKSTLPFGKIPILEVDGLTLHQSLAIARYLTKNTDLAGNTEMEQCHVDAIVDTLDDFMSCFPWAEKKQDVKEQMFNELLTYNAPHLMQDLDTYLGGREWLIGNSVTWADFYWEICSTTLLVFKPDLLDNHPRLVTLRKKVQAIPAVANWIKRRPQTKL.

The region spanning 2-79 is the GST N-terminal domain; sequence PNYKLTYFNM…YLTKNTDLAG (78 aa). Glutathione-binding positions include Y8, R14, W39, 49-51, and 63-64; these read GKI and QS. Positions 81–199 constitute a GST C-terminal domain; it reads TEMEQCHVDA…WIKRRPQTKL (119 aa).

This sequence belongs to the GST superfamily. Sigma family. In terms of assembly, homodimer. The cofactor is glutathione. Expressed in a number of megakaryocytic cell lines but not in platelets. Highly expressed in adipose tissue, macrophages and placenta. Also expressed at lower levels in lung, heart, lymph nodes, appendix, bone marrow and fetal liver.

It localises to the cytoplasm. The catalysed reaction is prostaglandin H2 = prostaglandin D2. The enzyme catalyses RX + glutathione = an S-substituted glutathione + a halide anion + H(+). It carries out the reaction 2-glyceryl-prostaglandin H2 = 2-glyceryl-prostaglandin D2. With respect to regulation, prostaglandin PGD2 synthesis is stimulated by calcium and magnesium ions. One calcium or magnesium ion is bound between the subunits of the homodimer. The interactions with the protein are for the most part mediated via water molecules. Magnesium increases the affinity for glutathione, while calcium has no effect on the affinity for glutathione. Its function is as follows. Bifunctional enzyme which catalyzes both the conversion of PGH2 to PGD2, a prostaglandin involved in smooth muscle contraction/relaxation and a potent inhibitor of platelet aggregation, and the conjugation of glutathione with a wide range of aryl halides and organic isothiocyanates. Also exhibits low glutathione-peroxidase activity towards cumene hydroperoxide. This Homo sapiens (Human) protein is Hematopoietic prostaglandin D synthase.